Consider the following 110-residue polypeptide: Prothymosin alpha (110 aa).

An N-acetylmethionine modification is found at Met1. Positions 1 to 110 are disordered; that stretch reads MSDAAVDTSS…TKKQKTDEDD (110 aa). The residue at position 2 (Ser2) is an N-acetylserine; in Prothymosin alpha, N-terminally processed. Ser2 is subject to Phosphoserine. Thr8 is modified (phosphothreonine). Ser9 and Ser10 each carry phosphoserine. 2 positions are modified to phosphothreonine: Thr13 and Thr14. Residues 13 to 31 show a composition bias toward basic and acidic residues; it reads TTKDLKEKKEVVEEAENGR. Lys15 is subject to N6-acetyllysine; alternate. Lys15 is modified (N6-succinyllysine; alternate). Residues 42 to 83 are compositionally biased toward acidic residues; the sequence is ENGEQEADNEVDEEEEEGGEEEEEEEEGDGEEEDGDEDEEAE. Positions 100–110 are enriched in basic and acidic residues; that stretch reads DTKKQKTDEDD. Phosphothreonine is present on Thr101. At Lys102 the chain carries N6-acetyllysine; alternate. Residue Lys102 forms a Glycyl lysine isopeptide (Lys-Gly) (interchain with G-Cter in SUMO2); alternate linkage. Thr106 carries the phosphothreonine modification.

This sequence belongs to the pro/parathymosin family. As to quaternary structure, interacts with NUPR1; regulates apoptotic process. In terms of processing, covalently linked to a small RNA of about 20 nucleotides.

It localises to the nucleus. Prothymosin alpha may mediate immune function by conferring resistance to certain opportunistic infections. This chain is Prothymosin alpha (PTMA), found in Pongo abelii (Sumatran orangutan).